The chain runs to 489 residues: Ent-kaurenoic acid oxidase 2 (489 aa).

Residues 5–25 form a helical membrane-spanning segment; that stretch reads GLILMWFPLIILGLFVLKWVL. Residue cysteine 436 participates in heme binding.

Belongs to the cytochrome P450 family. It depends on heme as a cofactor. Widely expressed. Highly expressed in influorescence stem, influorescence, and silique tissue. Weakly expressed in cauline and rosette leaves. Expressed at a weaker level in stem and influorescence than AtKAO1/CYP88A3.

The protein localises to the endoplasmic reticulum membrane. The enzyme catalyses ent-kaur-16-en-19-oate + 3 reduced [NADPH--hemoprotein reductase] + 3 O2 = gibberellin A12 + 3 oxidized [NADPH--hemoprotein reductase] + 4 H2O + 4 H(+). It catalyses the reaction ent-kaur-16-en-19-oate + reduced [NADPH--hemoprotein reductase] + O2 = ent-7alpha-hydroxykaur-16-en-19-oate + oxidized [NADPH--hemoprotein reductase] + H2O + H(+). The catalysed reaction is ent-7alpha-hydroxykaur-16-en-19-oate + reduced [NADPH--hemoprotein reductase] + O2 = gibberellin A12 aldehyde + oxidized [NADPH--hemoprotein reductase] + 2 H2O + H(+). It carries out the reaction gibberellin A12 aldehyde + reduced [NADPH--hemoprotein reductase] + O2 = gibberellin A12 + oxidized [NADPH--hemoprotein reductase] + H2O + 2 H(+). It participates in plant hormone biosynthesis; gibberellin biosynthesis. Functionally, catalyzes three successive oxidations of ent-kaurenoic acid giving gibberellin 12 (GA12), a key step in gibberellins (GAs) biosynthesis. GAs, which are involved many processes, including stem elongation, play a central role in plant development. This chain is Ent-kaurenoic acid oxidase 2, found in Arabidopsis thaliana (Mouse-ear cress).